The primary structure comprises 132 residues: Small ribosomal subunit protein uS8 (132 aa).

The protein belongs to the universal ribosomal protein uS8 family. In terms of assembly, part of the 30S ribosomal subunit. Contacts proteins S5 and S12.

Functionally, one of the primary rRNA binding proteins, it binds directly to 16S rRNA central domain where it helps coordinate assembly of the platform of the 30S subunit. This is Small ribosomal subunit protein uS8 from Caulobacter vibrioides (strain ATCC 19089 / CIP 103742 / CB 15) (Caulobacter crescentus).